Reading from the N-terminus, the 97-residue chain is Putative pterin-4-alpha-carbinolamine dehydratase (97 aa).

Belongs to the pterin-4-alpha-carbinolamine dehydratase family.

It carries out the reaction (4aS,6R)-4a-hydroxy-L-erythro-5,6,7,8-tetrahydrobiopterin = (6R)-L-erythro-6,7-dihydrobiopterin + H2O. This chain is Putative pterin-4-alpha-carbinolamine dehydratase, found in Cyanothece sp. (strain PCC 7425 / ATCC 29141).